The following is a 343-amino-acid chain: Pyridoxal 5'-phosphate synthase subunit PDX1 (343 aa).

Asp-73 is a binding site for D-ribose 5-phosphate. Residue Lys-130 is the Schiff-base intermediate with D-ribose 5-phosphate of the active site. A D-ribose 5-phosphate-binding site is contributed by Gly-202. D-glyceraldehyde 3-phosphate is bound at residue Gln-214. Residues Gly-263 and Gly-284–Ser-285 contribute to the D-ribose 5-phosphate site.

Belongs to the PdxS/SNZ family.

It catalyses the reaction aldehydo-D-ribose 5-phosphate + D-glyceraldehyde 3-phosphate + L-glutamine = pyridoxal 5'-phosphate + L-glutamate + phosphate + 3 H2O + H(+). It participates in cofactor biosynthesis; pyridoxal 5'-phosphate biosynthesis. Its function is as follows. Catalyzes the formation of pyridoxal 5'-phosphate from ribose 5-phosphate (RBP), glyceraldehyde 3-phosphate (G3P) and ammonia. The ammonia is provided by PDX2. Can also use ribulose 5-phosphate and dihydroxyacetone phosphate as substrates, resulting from enzyme-catalyzed isomerization of RBP and G3P, respectively. Also plays an indirect role in resistance to singlet oxygen-generating photosensitizers. This is Pyridoxal 5'-phosphate synthase subunit PDX1 (PDX1) from Cercospora nicotianae (Barn spot disease fungus).